The following is a 526-amino-acid chain: Na(+)/H(+) antiporter NhaB (526 aa).

11 helical membrane passes run 25-45 (IIAFLIFNPILFMADPYIAGW), 52-72 (IFTLAMALKCYPLQPGGLLLI), 89-109 (IVVNIEVVLLLVFMVAGIYFM), 139-159 (AFLSAFLDALTVVAVIIAVGM), 204-224 (LMMHAAVGTALGGVMTMVGEP), 240-260 (FFVRMSPVTIPVFFAGIATTF), 305-325 (GFIGIWLVIGLAGHFAAVGLI), 355-375 (FTALLCVFFGVVAVIIDQGLF), 391-411 (LVMFYLANGALSMVSDNVFVG), 448-468 (VATPNGQAAFLFLLTSAIAPL), and 479-499 (MALPYTIVLTIVGLAATYFGL).

The protein belongs to the NhaB Na(+)/H(+) (TC 2.A.34) antiporter family.

Its subcellular location is the cell inner membrane. It carries out the reaction 2 Na(+)(in) + 3 H(+)(out) = 2 Na(+)(out) + 3 H(+)(in). Its function is as follows. Na(+)/H(+) antiporter that extrudes sodium in exchange for external protons. In Pseudoalteromonas atlantica (strain T6c / ATCC BAA-1087), this protein is Na(+)/H(+) antiporter NhaB.